Here is a 609-residue protein sequence, read N- to C-terminus: QWRF motif-containing protein 4 (609 aa).

Disordered regions lie at residues 1 to 227 (MQVG…IRGN) and 271 to 369 (EVSS…TAQS). Composition is skewed to polar residues over residues 11–21 (GKQQQSVSDAT) and 46–57 (EVSSRYRSPTPT). Low complexity-rich tracts occupy residues 98 to 110 (PVSDVLVDLPVSS) and 129 to 143 (SLSVSFQSDSVSVPV). The segment covering 151–180 (VTSSTDRTLRPSSSNIAHKQQSETTSVTRK) has biased composition (polar residues). Low complexity-rich tracts occupy residues 271–285 (EVSSSTTSEDSSSTE) and 302–332 (SAPGSRTASPSRSSFSSSSSSNSRGMSPSRG). A QWRF motif motif is present at residues 407–410 (QWRF). Positions 588-609 (EEEVRDDAESSPLLPLSKFQWP) are disordered.

This sequence belongs to the QWRF family.

This chain is QWRF motif-containing protein 4 (QWRF4), found in Arabidopsis thaliana (Mouse-ear cress).